We begin with the raw amino-acid sequence, 146 residues long: Large ribosomal subunit protein uL15 (146 aa).

The segment at 18–45 (VLGRGLGCGKGKTSGRGHKGQKARSGCA) is disordered. The span at 30-39 (TSGRGHKGQK) shows a compositional bias: basic residues.

This sequence belongs to the universal ribosomal protein uL15 family. As to quaternary structure, part of the 50S ribosomal subunit.

Binds to the 23S rRNA. This Anaplasma marginale (strain St. Maries) protein is Large ribosomal subunit protein uL15.